Reading from the N-terminus, the 356-residue chain is Peptide methionine sulfoxide reductase MsrA/MsrB (356 aa).

Residues 46–199 (HEIYLAGGCF…PNGYCHIDLE (154 aa)) form a peptide methionine sulfoxide reductase A region. The active site involves C54. The region spanning 216-339 (DAELKAKLTP…NSAAVKFIPL (124 aa)) is the MsrB domain. C328 acts as the Nucleophile in catalysis.

It in the N-terminal section; belongs to the MsrA Met sulfoxide reductase family. This sequence in the C-terminal section; belongs to the MsrB Met sulfoxide reductase family.

The enzyme catalyses L-methionyl-[protein] + [thioredoxin]-disulfide + H2O = L-methionyl-(S)-S-oxide-[protein] + [thioredoxin]-dithiol. The catalysed reaction is [thioredoxin]-disulfide + L-methionine + H2O = L-methionine (S)-S-oxide + [thioredoxin]-dithiol. It carries out the reaction L-methionyl-[protein] + [thioredoxin]-disulfide + H2O = L-methionyl-(R)-S-oxide-[protein] + [thioredoxin]-dithiol. Functionally, has an important function as a repair enzyme for proteins that have been inactivated by oxidation. Catalyzes the reversible oxidation-reduction of methionine sulfoxide in proteins to methionine. This is Peptide methionine sulfoxide reductase MsrA/MsrB (msrAB) from Aggregatibacter actinomycetemcomitans (Actinobacillus actinomycetemcomitans).